The primary structure comprises 499 residues: MEMDIDCIHHLDFSGHSTLTNTPSSDNDNYGCSWNHWSPVVNWDAFTGNQDDFHHLIDSMIDDNNTGPAFSDHTASTTSEEEEEEEATTTTMTTTTTTTTTTPEAADDDFKGLRLVHLLMAGAEALTGANKNRELARVILVRLKELVSHTDGTNMERLAAYFTEALQGLLEGAGGAYNSSSKHHVIGGPHHEPQNDALAAFQLLQDMSPYVKFGHFTANQAIVEAVAHERRVHIVDYDIMEGVQWASLMQALASNPNGPHLRITALSRSGVGRRSMATVQETGRRLTAFATSLGQPFSFHHSRLESDETFRPAGLKLVRGEALVFNCMLNLPHLTYRSPNSVASFLTAAKALRPRLVTVVEEEVGSALGGFVERFMDSLHHFSAVFDSLEAGFPMQGRARALVERVFLGPRIVGSLARIYRTGGGGEERGSWREWLRAAGFSGVAVSSANHCQSNLLLGLFNDGYRVEELGSNKLVLHWKTRRLLSASLWTCSSESDCA.

Positions 64–106 (NNTGPAFSDHTASTTSEEEEEEEATTTTMTTTTTTTTTTPEAA) are disordered. A compositionally biased stretch (low complexity) spans 88–104 (TTTTMTTTTTTTTTTPE). A GRAS domain is found at 106–491 (ADDDFKGLRL…RRLLSASLWT (386 aa)). The interval 113–182 (LRLVHLLMAG…AGGAYNSSSK (70 aa)) is leucine repeat I (LRI). The tract at residues 201–265 (FQLLQDMSPY…PNGPHLRITA (65 aa)) is VHIID. The VHIID signature appears at 232 to 236 (VHIVD). The tract at residues 281–313 (ETGRRLTAFATSLGQPFSFHHSRLESDETFRPA) is leucine repeat II (LRII). Residues 323–414 (LVFNCMLNLP…RVFLGPRIVG (92 aa)) form a PFYRE region. The tract at residues 417 to 491 (ARIYRTGGGG…RRLLSASLWT (75 aa)) is SAW.

This sequence belongs to the GRAS family. As to quaternary structure, interacts with IPN2. Binds to RAD1. Interacts with RAM1. In terms of tissue distribution, highly expressed in roots.

The protein resides in the nucleus membrane. The protein localises to the endoplasmic reticulum. Functionally, transcriptional regulator essential for Nod-factor-induced gene expression. Acts downstream of calcium spiking and a calcium/calmodulin-dependent protein kinase required for activation of early nodulation gene expression. Transcription factor involved in the induction of NIN and ENOD40 genes, which are required for rhizobial infection and early nodule development. Does not seem to contribute to the early steps of the arbuscular mycorrhizal fungus infection and colonization processes in roots. Transcription factor involved in the positive regulation of the beta-carotene isomerase D27, which participates in a pathway leading to biosynthesis of strigolactones in roots. This is Protein NODULATION SIGNALING PATHWAY 2 from Lotus japonicus (Lotus corniculatus var. japonicus).